Here is a 340-residue protein sequence, read N- to C-terminus: Serpentine receptor class alpha-18 (340 aa).

A run of 6 helical transmembrane segments spans residues 29 to 49 (FNFI…WLAI), 109 to 129 (VFEL…VFSL), 149 to 169 (FIAT…FYIV), 198 to 218 (VRTG…YVCV), 249 to 269 (ISIV…NLLI), and 285 to 305 (IVSF…VIYF).

It belongs to the nematode receptor-like protein sra family.

The protein resides in the membrane. This chain is Serpentine receptor class alpha-18 (sra-18), found in Caenorhabditis elegans.